The following is a 1083-amino-acid chain: Glutamate receptor-interacting protein 2 (1083 aa).

3 consecutive PDZ domains span residues 58–141, 156–244, and 258–342; these read IVEL…EYEL, TIEI…EYDV, and LVEI…LPAH. A compositionally biased stretch (polar residues) spans 408–422; it reads AGTPGFSSQNSNTLP. Residues 408-460 are disordered; the sequence is AGTPGFSSQNSNTLPRTVHPMSPRTTMNRRRQKRKDHKSSLSLASSTVGPGGQ. Over residues 434-444 the composition is skewed to basic residues; that stretch reads MNRRRQKRKDH. 3 consecutive PDZ domains span residues 468-555, 569-652, and 667-749; these read EIIL…EIEF, HVKL…RKDE, and TVEL…KKQT. Disordered stretches follow at residues 754 to 783, 853 to 872, and 936 to 965; these read PQRLSDSMNEGSDPEDDLTDSQKTSKLSEI, NEQDWEKPTRYPSQPNGLET, and GSHHISSNSPKKENKLSQDARSKKEEVHNA. Polar residues predominate over residues 774–783; it reads SQKTSKLSEI. Residues 945–963 are compositionally biased toward basic and acidic residues; the sequence is PKKENKLSQDARSKKEEVH. The PDZ 7 domain occupies 974-1056; that stretch reads KVTVQKDMDT…RLDLVISRGL (83 aa).

Belongs to the GRIP2 family. In terms of tissue distribution, enriched in the mitochondrial cloud of stage I oocytes, before becoming concentrated at the tip of the vegetal cortex in stage II oocytes. Expression becomes localized to the germ plasm of stage III-IV oocytes and early cleavage stages. At the tailbud stage, localizes to the migrating primordial germ cells (PGCs) until PGC migration is complete (stage 40), at which point expression disappears. In the adult, expressed in the brain, ovary, eye, muscle, spinal cord and very weakly in adipocytes.

It localises to the cytoplasm. Its function is as follows. Plays an important role in primordial germ cell (PGC) maintenance and efficiency of PGC migration. This is Glutamate receptor-interacting protein 2 from Xenopus laevis (African clawed frog).